The sequence spans 1051 residues: Carbamoyl phosphate synthase large chain (1051 aa).

Residues 1–399 (MKETPKKVLV…SLQKAVRMLD (399 aa)) are carboxyphosphate synthetic domain. Arg-127, Arg-167, Gly-173, Gly-174, Lys-206, Leu-208, Glu-213, Gly-239, Val-240, His-241, Gln-282, and Glu-296 together coordinate ATP. Residues 131–325 (RETMIENNLP…LAYVSAKLAL (195 aa)) form the ATP-grasp 1 domain. Gln-282, Glu-296, and Asn-298 together coordinate Mg(2+). Gln-282, Glu-296, and Asn-298 together coordinate Mn(2+). The oligomerization domain stretch occupies residues 400–548 (IGEPGVVGGK…LTYNGTEDDL (149 aa)). The carbamoyl phosphate synthetic domain stretch occupies residues 549 to 930 (EFSQGNKLLM…LKSWLSSIPN (382 aa)). Positions 673 to 863 (SKLLDKLGIS…LINESMKAIF (191 aa)) constitute an ATP-grasp 2 domain. 10 residues coordinate ATP: Arg-709, Lys-748, Ile-750, Glu-755, Gly-779, Val-780, His-781, Ser-782, Gln-822, and Glu-834. Residues Gln-822, Glu-834, and Asn-836 each contribute to the Mg(2+) site. 3 residues coordinate Mn(2+): Gln-822, Glu-834, and Asn-836. The MGS-like domain occupies 930–1051 (NRIPNKNGIA…FEISEYGGGI (122 aa)). The interval 931–1051 (RIPNKNGIAL…FEISEYGGGI (121 aa)) is allosteric domain.

The protein belongs to the CarB family. Composed of two chains; the small (or glutamine) chain promotes the hydrolysis of glutamine to ammonia, which is used by the large (or ammonia) chain to synthesize carbamoyl phosphate. Tetramer of heterodimers (alpha,beta)4. Mg(2+) serves as cofactor. It depends on Mn(2+) as a cofactor.

The enzyme catalyses hydrogencarbonate + L-glutamine + 2 ATP + H2O = carbamoyl phosphate + L-glutamate + 2 ADP + phosphate + 2 H(+). It carries out the reaction hydrogencarbonate + NH4(+) + 2 ATP = carbamoyl phosphate + 2 ADP + phosphate + 2 H(+). It functions in the pathway amino-acid biosynthesis; L-arginine biosynthesis; carbamoyl phosphate from bicarbonate: step 1/1. It participates in pyrimidine metabolism; UMP biosynthesis via de novo pathway; (S)-dihydroorotate from bicarbonate: step 1/3. Functionally, large subunit of the glutamine-dependent carbamoyl phosphate synthetase (CPSase). CPSase catalyzes the formation of carbamoyl phosphate from the ammonia moiety of glutamine, carbonate, and phosphate donated by ATP, constituting the first step of 2 biosynthetic pathways, one leading to arginine and/or urea and the other to pyrimidine nucleotides. The large subunit (synthetase) binds the substrates ammonia (free or transferred from glutamine from the small subunit), hydrogencarbonate and ATP and carries out an ATP-coupled ligase reaction, activating hydrogencarbonate by forming carboxy phosphate which reacts with ammonia to form carbamoyl phosphate. This Saccharolobus islandicus (strain M.16.4 / Kamchatka #3) (Sulfolobus islandicus) protein is Carbamoyl phosphate synthase large chain.